The chain runs to 483 residues: S-adenosylhomocysteine hydrolase-like protein 1 (483 aa).

The interval 1–56 (MQEFTKFPTKTGRRSLSRSISQSSTDSYSSAASYTDSSDDEVSPREKQQTNSKGSS) is disordered. Residues 17–36 (SRSISQSSTDSYSSAASYTD) show a composition bias toward low complexity. Positions 18-45 (RSISQSSTDSYSSAASYTDSSDDEVSPR) are PEST. Ser-21 carries the phosphoserine; by PKD modification. A phosphoserine mark is found at Ser-24, Ser-27, Ser-30, and Ser-37. An interaction with BCL2L10 region spans residues 91-154 (QGEKPLAGAK…EAGVAVFAWK (64 aa)). Positions 108, 182, 207, 237, and 241 each coordinate substrate. Residues 234 to 401 (SVTKQKFDNL…EGRLLNLSCS (168 aa)) form an NAD binding region. Residues 271–275 (GYGEV), Glu-294, and Asn-329 contribute to the NAD(+) site. Ser-344 is subject to Phosphoserine. 350 to 352 (MGH) provides a ligand contact to NAD(+). The tract at residues 473-483 (NGPFKPNYYRY) is PDZ-binding.

This sequence belongs to the adenosylhomocysteinase family. As to quaternary structure, forms multimers. Forms heteromultimers with AHCYL2 (via the C-terminal region). Interacts (when phosphorylated) with ITPR1 (when not phosphorylated); the interaction suppresses inositol 1,4,5-trisphosphate binding to ITPR1. Interacts with BCL2L10; this strengthens the interaction of AHCYL1 with ITPR1. Interacts with CFTR and SLC26A6; the interactions take place once AHCYL1 is released from ITPR1 and increase CFTR and SLC26A6 activities. Interacts with RRM1; in a phosphorylation- and (dATP)-dependent manner. Interacts (via PEST domain when phosphorylated) with SLC4A4 isoform 1 but not isoform 2; the interaction increases SLC4A4 isoform 1 activity. Interacts (when phosphorylated) with SLC9A3; the interaction is required for SLC9A3 apical location and activity. Interacts (when phosphorylated) with FIP1L1; the interaction is direct and associates AHCYL1 with the CPSF complex and RNA. Interacts with PAPOLA. Interacts with ZCCHC4. Interacts with AHCY. NAD(+) is required as a cofactor. In terms of processing, phosphorylated at Ser/Thr residues between Ser-21 and Thr-25 in the PEST region: required for interaction with dATP-bound RRM1 and ITPR1. Phosphorylation at Ser-21 by PRKD1 and CAMK4 is required for further phosphorylations by CSNK1A1. Phosphorylation is induced by oxidative stress. Probably phosphorylated by CAMK2A; phosphorylation at Ser-21 may be required for interaction with SLC9A3. Dephosphorylated in response to apoptotic stress conditions which causes translocation of both AHCYL1 and BCL2L10 from mitochondria-associated endoplasmic reticulum membranes and promotes apoptosis. As to expression, expressed in kidney proximal tubules and outer medulla (at protein level).

It is found in the endoplasmic reticulum. The protein localises to the cytoplasm. Its subcellular location is the cytosol. The protein resides in the apical cell membrane. It localises to the microsome. In terms of biological role, multifaceted cellular regulator which coordinates several essential cellular functions including regulation of epithelial HCO3(-) and fluid secretion, mRNA processing and DNA replication. Regulates ITPR1 sensitivity to inositol 1,4,5-trisphosphate, competing for the common binding site and acting as endogenous 'pseudoligand' whose inhibitory activity can be modulated by its phosphorylation status. Promotes the formation of contact points between the endoplasmic reticulum (ER) and mitochondria, facilitating transfer of Ca(2+) from the ER to mitochondria. Under normal cellular conditions, functions cooperatively with BCL2L10 to limit ITPR1-mediated Ca(2+) release but, under apoptotic stress conditions, dephosphorylated which promotes dissociation of both AHCYL1 and BCL2L10 from mitochondria-associated endoplasmic reticulum membranes, inhibits BCL2L10 interaction with ITPR1 and leads to increased Ca(2+) transfer to mitochondria which promotes apoptosis. In the pancreatic and salivary ducts, at resting state, attenuates inositol 1,4,5-trisphosphate-induced calcium release by interacting with ITPR1. When extracellular stimuli induce ITPR1 phosphorylation or inositol 1,4,5-trisphosphate production, dissociates from ITPR1 to interact with CFTR and SLC26A6, mediating their synergistic activation by calcium and cAMP that stimulates the epithelial secretion of electrolytes and fluid. Also activates basolateral SLC4A4 isoform 1 to coordinate fluid and HCO3(-) secretion. Inhibits the effect of STK39 on SLC4A4 and CFTR by recruiting PP1 phosphatase which activates SLC4A4, SLC26A6 and CFTR through dephosphorylation. Mediates the induction of SLC9A3 surface expression produced by Angiotensin-2. Depending on the cell type, activates SLC9A3 in response to calcium or reverses SLC9A3R2-dependent calcium inhibition. May modulate the polyadenylation state of specific mRNAs, both by controlling the subcellular location of FIP1L1 and by inhibiting PAPOLA activity, in response to a stimulus that alters its phosphorylation state. Acts as a (dATP)-dependent inhibitor of ribonucleotide reductase large subunit RRM1, controlling the endogenous dNTP pool and ensuring normal cell cycle progression. In vitro does not exhibit any S-adenosyl-L-homocysteine hydrolase activity. This is S-adenosylhomocysteine hydrolase-like protein 1 from Rattus norvegicus (Rat).